Here is a 158-residue protein sequence, read N- to C-terminus: Regulator of sigma D (158 aa).

The protein belongs to the Rsd/AlgQ family. In terms of assembly, interacts with RpoD.

Its subcellular location is the cytoplasm. Binds RpoD and negatively regulates RpoD-mediated transcription activation by preventing the interaction between the primary sigma factor RpoD with the catalytic core of the RNA polymerase and with promoter DNA. May be involved in replacement of the RNA polymerase sigma subunit from RpoD to RpoS during the transition from exponential growth to the stationary phase. This chain is Regulator of sigma D, found in Shigella dysenteriae serotype 1 (strain Sd197).